A 245-amino-acid polypeptide reads, in one-letter code: 8-amino-3,8-dideoxy-manno-octulosonate cytidylyltransferase (245 aa).

The protein belongs to the KdsB family.

It is found in the cytoplasm. The catalysed reaction is 8-amino-3,8-dideoxy-alpha-D-manno-octulosonate + CTP = CMP-8-amino-3,8-dideoxy-alpha-D-manno-oct-2-ulosonate + diphosphate. It functions in the pathway bacterial outer membrane biogenesis; lipopolysaccharide biosynthesis. Functionally, activates KDO8N (a required 8-carbon sugar) for incorporation into bacterial lipopolysaccharide in the Shewanella genus. In Shewanella baltica (strain OS223), this protein is 8-amino-3,8-dideoxy-manno-octulosonate cytidylyltransferase.